The primary structure comprises 284 residues: Tropomyosin (284 aa).

Residues 1–284 (MDGIKKKMIA…DQTFAELTGY (284 aa)) are a coiled coil. The interval 111–131 (TKLEEASKTAEESERGRKDLE) is disordered.

This sequence belongs to the tropomyosin family. Homodimer.

Tropomyosin, in association with the troponin complex, plays a central role in the calcium dependent regulation of muscle contraction. The protein is Tropomyosin of Schistosoma haematobium (Blood fluke).